Reading from the N-terminus, the 291-residue chain is S-adenosylmethionine uptake transporter (291 aa).

Transmembrane regions (helical) follow at residues 4–24, 41–61, 74–91, 98–118, 121–141, 148–168, 178–198, 206–226, 237–257, and 260–280; these read ALKTYSIGIGWFLLSLVSSSA, VAFFRFFFSSIVLLPFVVYYG, ILRGLLLFFGMTSWTYGL, TATVISFSIPLFTLILAVFFL, NIIWQRWVVTIVGFVGLVITL, FNPEMLYFVLAAISFAMLDII, MISMLFYSAIVTAVVSIPAAA, LFELALLFILGSSGSLILFLL, ATAPYRYLELVISAIAAYFIF, and FPDKSTLHGAVIIIPATLFII. 2 EamA domains span residues 21–141 and 160–280; these read SSSA…VITL and ISFA…LFII.

The protein belongs to the drug/metabolite transporter (DMT) superfamily. 10 TMS drug/metabolite exporter (DME) (TC 2.A.7.3) family.

The protein localises to the cell inner membrane. Transports S-adenosylmethionine. In Rickettsia bellii (strain RML369-C), this protein is S-adenosylmethionine uptake transporter (sam).